A 553-amino-acid chain; its full sequence is uncharacterized protein (553 aa).

Positions 1 to 31 are cleaved as a signal peptide; sequence MEDIMTSLLVATSRVVVTISLAYVPVKSAFA. Residue Ser207 is the Acyl-ester intermediate of the active site. An intrachain disulfide couples Cys275 to Cys292. Residues Asp276, Asp279, Val281, Asp283, and Leu285 each contribute to the Ca(2+) site. Active-site charge relay system residues include Asp444 and His482. An intrachain disulfide couples Cys528 to Cys550.

Belongs to the tannase family.

This is an uncharacterized protein from Agrobacterium fabrum (strain C58 / ATCC 33970) (Agrobacterium tumefaciens (strain C58)).